The primary structure comprises 270 residues: 4-hydroxy-tetrahydrodipicolinate reductase (270 aa).

NAD(+) is bound by residues Gly-9–Met-14 and Glu-35. Arg-36 provides a ligand contact to NADP(+). NAD(+)-binding positions include Gly-99–Thr-101 and Ala-123–Phe-126. Catalysis depends on His-156, which acts as the Proton donor/acceptor. His-157 provides a ligand contact to (S)-2,3,4,5-tetrahydrodipicolinate. Residue Lys-160 is the Proton donor of the active site. Gly-166 to Thr-167 is a (S)-2,3,4,5-tetrahydrodipicolinate binding site.

Belongs to the DapB family.

Its subcellular location is the cytoplasm. The catalysed reaction is (S)-2,3,4,5-tetrahydrodipicolinate + NAD(+) + H2O = (2S,4S)-4-hydroxy-2,3,4,5-tetrahydrodipicolinate + NADH + H(+). The enzyme catalyses (S)-2,3,4,5-tetrahydrodipicolinate + NADP(+) + H2O = (2S,4S)-4-hydroxy-2,3,4,5-tetrahydrodipicolinate + NADPH + H(+). The protein operates within amino-acid biosynthesis; L-lysine biosynthesis via DAP pathway; (S)-tetrahydrodipicolinate from L-aspartate: step 4/4. Its function is as follows. Catalyzes the conversion of 4-hydroxy-tetrahydrodipicolinate (HTPA) to tetrahydrodipicolinate. The sequence is that of 4-hydroxy-tetrahydrodipicolinate reductase from Haemophilus influenzae (strain 86-028NP).